Reading from the N-terminus, the 150-residue chain is Transcription antitermination protein NusB (150 aa).

This sequence belongs to the NusB family.

Functionally, involved in transcription antitermination. Required for transcription of ribosomal RNA (rRNA) genes. Binds specifically to the boxA antiterminator sequence of the ribosomal RNA (rrn) operons. The protein is Transcription antitermination protein NusB of Streptococcus pyogenes serotype M3 (strain ATCC BAA-595 / MGAS315).